The primary structure comprises 263 residues: Pheophorbidase (263 aa).

Positions 13-244 (HFVFVHGASH…LEESDHSAFF (232 aa)) constitute an AB hydrolase-1 domain. The active-site Acyl-ester intermediate is Ser-88. Residues Asp-212 and His-240 each act as charge relay system in the active site.

This sequence belongs to the AB hydrolase superfamily. In terms of assembly, homodimer.

The protein localises to the cytoplasm. The enzyme catalyses pheophorbide a + H2O + H(+) = pyropheophorbide a + methanol + CO2. Its activity is regulated as follows. Inhibited by methanol and phenylmethylsulfonicfluoride (PMSF). Involved in chlorophyll degradation. Specific for the pheophorbides of the dihydroporphyrin and tetrahydroporphyrin types. Chlorophyllide a, pheophytin a and the nonfluorescent chlorophyll catabolite (NCC) are not used as substrates. In Raphanus sativus (Radish), this protein is Pheophorbidase (PPD).